Consider the following 247-residue polypeptide: Small ribosomal subunit protein uS3 (247 aa).

The KH type-2 domain occupies 39–109 (IRSMIRSFPE…KVQIKVKEIK (71 aa)). The segment at 224–247 (RSRRESGQKSDELVRDERTHAERG) is disordered. The span at 227–247 (RESGQKSDELVRDERTHAERG) shows a compositional bias: basic and acidic residues.

Belongs to the universal ribosomal protein uS3 family. As to quaternary structure, part of the 30S ribosomal subunit. Forms a tight complex with proteins S10 and S14.

Binds the lower part of the 30S subunit head. Binds mRNA in the 70S ribosome, positioning it for translation. This Treponema pallidum (strain Nichols) protein is Small ribosomal subunit protein uS3.